The following is a 365-amino-acid chain: tRNA N6-adenosine threonylcarbamoyltransferase (365 aa).

Fe cation is bound by residues H119 and H123. Residues 141–145 (LVSGG), D174, G187, and N288 contribute to the substrate site. Fe cation is bound at residue D316.

It belongs to the KAE1 / TsaD family. The cofactor is Fe(2+).

The protein localises to the cytoplasm. The catalysed reaction is L-threonylcarbamoyladenylate + adenosine(37) in tRNA = N(6)-L-threonylcarbamoyladenosine(37) in tRNA + AMP + H(+). Required for the formation of a threonylcarbamoyl group on adenosine at position 37 (t(6)A37) in tRNAs that read codons beginning with adenine. Is involved in the transfer of the threonylcarbamoyl moiety of threonylcarbamoyl-AMP (TC-AMP) to the N6 group of A37, together with TsaE and TsaB. TsaD likely plays a direct catalytic role in this reaction. The protein is tRNA N6-adenosine threonylcarbamoyltransferase of Rhizobium etli (strain ATCC 51251 / DSM 11541 / JCM 21823 / NBRC 15573 / CFN 42).